Reading from the N-terminus, the 196-residue chain is ATP-dependent Clp protease proteolytic subunit (196 aa).

S98 acts as the Nucleophile in catalysis. Residue H123 is part of the active site.

Belongs to the peptidase S14 family. As to quaternary structure, fourteen ClpP subunits assemble into 2 heptameric rings which stack back to back to give a disk-like structure with a central cavity, resembling the structure of eukaryotic proteasomes.

The protein resides in the cytoplasm. The catalysed reaction is Hydrolysis of proteins to small peptides in the presence of ATP and magnesium. alpha-casein is the usual test substrate. In the absence of ATP, only oligopeptides shorter than five residues are hydrolyzed (such as succinyl-Leu-Tyr-|-NHMec, and Leu-Tyr-Leu-|-Tyr-Trp, in which cleavage of the -Tyr-|-Leu- and -Tyr-|-Trp bonds also occurs).. Its function is as follows. Cleaves peptides in various proteins in a process that requires ATP hydrolysis. Has a chymotrypsin-like activity. Plays a major role in the degradation of misfolded proteins. The sequence is that of ATP-dependent Clp protease proteolytic subunit from Actinobacillus pleuropneumoniae serotype 5b (strain L20).